Consider the following 705-residue polypeptide: Tyrosine decarboxylase (705 aa).

Residues 22-32 (RIRNSLSPSRP) are compositionally biased toward polar residues. Positions 22–81 (RIRNSLSPSRPSMSEATATGSSSSSRASTTIPSTPNMDVTPTVEDPRQNDNNASGMTRDE) are disordered. Residues 33 to 55 (SMSEATATGSSSSSRASTTIPST) show a composition bias toward low complexity. Lysine 380 is subject to N6-(pyridoxal phosphate)lysine. Residues 554-620 (VKAVIAEEDE…AQKQHESLAK (67 aa)) are a coiled coil. Over residues 667 to 678 (HSQRPNRLSQSP) the composition is skewed to polar residues. The interval 667 to 687 (HSQRPNRLSQSPGSAGSAFFD) is disordered.

The protein belongs to the group II decarboxylase family. It depends on pyridoxal 5'-phosphate as a cofactor. Expressed in the gonadal sheath projections in between the oocytes, in head RIM motor neurons and RIC interneurons.

The protein localises to the cytoplasm. It is found in the cell projection. Its subcellular location is the axon. The protein resides in the perikaryon. The catalysed reaction is L-tyrosine + H(+) = tyramine + CO2. In terms of biological role, required for the decarboxylation of tyrosine to tyramine, a precursor of octopamine but probably also itself a neurotransmitter. Involved in the regulation of egg laying, which is inhibited by tyramine. Also involved in controlling locomotion and head movements. Due to its involvement in octopamine biosynthesis, also required for crtc-1-dependent regulation of AMPK-mediated longevity which requires octopamine signaling. In Caenorhabditis elegans, this protein is Tyrosine decarboxylase.